The primary structure comprises 250 residues: Leucyl/phenylalanyl-tRNA--protein transferase (250 aa).

It belongs to the L/F-transferase family.

Its subcellular location is the cytoplasm. The catalysed reaction is N-terminal L-lysyl-[protein] + L-leucyl-tRNA(Leu) = N-terminal L-leucyl-L-lysyl-[protein] + tRNA(Leu) + H(+). It catalyses the reaction N-terminal L-arginyl-[protein] + L-leucyl-tRNA(Leu) = N-terminal L-leucyl-L-arginyl-[protein] + tRNA(Leu) + H(+). The enzyme catalyses L-phenylalanyl-tRNA(Phe) + an N-terminal L-alpha-aminoacyl-[protein] = an N-terminal L-phenylalanyl-L-alpha-aminoacyl-[protein] + tRNA(Phe). Functionally, functions in the N-end rule pathway of protein degradation where it conjugates Leu, Phe and, less efficiently, Met from aminoacyl-tRNAs to the N-termini of proteins containing an N-terminal arginine or lysine. The chain is Leucyl/phenylalanyl-tRNA--protein transferase from Cupriavidus pinatubonensis (strain JMP 134 / LMG 1197) (Cupriavidus necator (strain JMP 134)).